Reading from the N-terminus, the 466-residue chain is RUS family member 1 (466 aa).

N-acetylalanine is present on A2. A helical transmembrane segment spans residues 245 to 265; that stretch reads LLMLPLVSDCLSLSLGCFILL.

Belongs to the RUS1 family.

It is found in the membrane. This Rattus norvegicus (Rat) protein is RUS family member 1 (Rusf1).